The sequence spans 114 residues: Propane 2-monooxygenase, effector component (114 aa).

The protein belongs to the TmoD/XamoD family. As to quaternary structure, the propane 2-monooxygenase multicomponent enzyme system is composed of an electron transfer component and a monooxygenase component interacting with the effector protein MimD. The electron transfer component is composed of a reductase (MimB), and the monooxygenase component is formed by a large subunit (MimA) and a small subunit (MimC).

In terms of biological role, effector component of the propane 2-monooxygenase multicomponent enzyme system which is involved in the degradation of propane via the O2-dependent hydroxylation of propane. The protein is Propane 2-monooxygenase, effector component of Mycolicibacterium smegmatis (strain ATCC 700084 / mc(2)155) (Mycobacterium smegmatis).